The sequence spans 566 residues: Cytokine-like nuclear factor N-PAC (566 aa).

The region spanning 9–70 (VNDLVWAKMK…ETQIKPYLQF (62 aa)) is the PWWP domain. Disordered stretches follow at residues 127–147 (VASG…NTTT) and 206–234 (MLDD…SSLD). The interval 274–566 (RNIKASQLKF…ASAVYVRARF (293 aa)) is dehydrogenase domain. NAD(+)-binding positions include 284–298 (GFLG…IVKN) and lysine 518.

This sequence belongs to the HIBADH-related family. NP60 subfamily. As to quaternary structure, binds to mononucleosomes. Interacts with male-specific lethal (MSL) histone acetyltransferase complex at least composed of mof, msl-1, msl-2 and msl-3.

The protein localises to the chromosome. Its function is as follows. May have oxidoreductase activity. In Anopheles gambiae (African malaria mosquito), this protein is Cytokine-like nuclear factor N-PAC.